The chain runs to 354 residues: F-box/kelch-repeat protein At1g80440 (354 aa).

The 48-residue stretch at 2–49 (ELIPNLPDDVARECLLRSSYQQFPVIASVCRAWNREVSLSQFLHQRKA) folds into the F-box domain. 4 Kelch repeats span residues 63–110 (RVDP…CRLV), 115–163 (DLIV…ASDS), 166–213 (TVLV…FHAG), and 215–263 (FHVI…PPTC).

The protein is F-box/kelch-repeat protein At1g80440 of Arabidopsis thaliana (Mouse-ear cress).